The following is a 526-amino-acid chain: Maturase K (526 aa).

Belongs to the intron maturase 2 family. MatK subfamily.

Its subcellular location is the plastid. It localises to the chloroplast. In terms of biological role, usually encoded in the trnK tRNA gene intron. Probably assists in splicing its own and other chloroplast group II introns. This chain is Maturase K, found in Iris pseudacorus (Yellow flag).